The chain runs to 218 residues: Probable nicotinate-nucleotide adenylyltransferase (218 aa).

This sequence belongs to the NadD family.

It catalyses the reaction nicotinate beta-D-ribonucleotide + ATP + H(+) = deamido-NAD(+) + diphosphate. It participates in cofactor biosynthesis; NAD(+) biosynthesis; deamido-NAD(+) from nicotinate D-ribonucleotide: step 1/1. Its function is as follows. Catalyzes the reversible adenylation of nicotinate mononucleotide (NaMN) to nicotinic acid adenine dinucleotide (NaAD). This is Probable nicotinate-nucleotide adenylyltransferase from Syntrophotalea carbinolica (strain DSM 2380 / NBRC 103641 / GraBd1) (Pelobacter carbinolicus).